We begin with the raw amino-acid sequence, 538 residues long: Retinoblastoma-binding protein 5 (538 aa).

WD repeat units follow at residues 22 to 63 (DCIS…KIIS) and 64 to 103 (AHIHPVCSLCWSRDGHKLVSASTDNIVSQWDVLSGDCDQR). K129 is covalently cross-linked (Glycyl lysine isopeptide (Lys-Gly) (interchain with G-Cter in SUMO2)). 4 WD repeats span residues 148-188 (DDDS…LVAS), 196-235 (SNTTAIKSIEFARKGSCFLINTADRIIRVYDGREILTCGR), 249-291 (VNRT…KILH), and 293-331 (TRGELLLDVAWHPVRPIIASISSGVVSIWAQNQVENWSA). Residue T252 is modified to Phosphothreonine; by CDK1. Residues 330–366 (SAFAPDFKELDENVEYEERESEFDIEDEDKSEPEQTG) form an interaction with ASH2L region. Positions 344 to 360 (EYEERESEFDIEDEDKS) are enriched in acidic residues. The interval 344–377 (EYEERESEFDIEDEDKSEPEQTGADAAEDEEVDV) is disordered. S350 is modified (phosphoserine). An interaction with WDR5 region spans residues 371-380 (EDEEVDVTSV). Phosphoserine is present on residues S388 and S389. The tract at residues 408–519 (VEDPEENPYG…LPLEGSTKGK (112 aa)) is disordered. Over residues 479–490 (SKKKQAGRPKGS) the composition is skewed to basic residues. Residues 491 to 510 (KGKEKDSPFKPKLYKGDRGL) are compositionally biased toward basic and acidic residues. S497 is subject to Phosphoserine; by CDK1. At S525 the chain carries Phosphoserine.

As to quaternary structure, component of the SET1 complex, at least composed of the catalytic subunit (SETD1A or SETD1B), WDR5, WDR82, RBBP5, ASH2L/ASH2, CXXC1/CFP1, HCFC1 and DPY30. Core component of several methyltransferase-containing complexes including MLL1/MLL, MLL2/3 (also named ASCOM complex) and MLL4/WBP7. Each complex is at least composed of ASH2L, RBBP5, WDR5, DPY30, one or more specific histone methyltransferases (KMT2A/MLL1, KMT2D/MLL2, KMT2C/MLL3 and KMT2B/MLL4), and the facultative components PAGR1, BACC1, CHD8, E2F6, HCFC1, HCFC2, HSP70, INO80C, KDM6A, KANSL1, LAS1L, MAX, MCRS1, MEN1, MGA, MYST1/MOF, NCOA6, PAXIP1/PTIP, PELP1, PHF20, PRP31, RING2, RUVB1/TIP49A, RUVB2/TIP49B, SENP3, TAF1, TAF4, TAF6, TAF7, TAF9, TEX10 and alpha- and beta-tubulin. Component of a histone methylation complex composed of at least ZNF335, RBBP5, ASH2L and WDR5; the complex may have histone H3-specific methyltransferase activity, however does not have specificity for 'Lys-4' of histone H3. Interacts with ZNF335. Interacts with ASH2L; the interaction is direct. Interacts with WDR5; the interaction is direct. Components of the ZNF335-RBBP5-ASH2L-WDR5 histone methylation complex may associate with components of a nuclear receptor-mediated transcription complex to form a complex at least composed of ZNF335, HCFC1, CCAR2, EMSY, MKI67, RBBP5, ASH2L and WDR5. Within this complex interacts with EMSY. Found in a complex with RBBP5, ASH2L, DPY30, KMT2A, KMT2D and WDR5. Interacts with SETD1A. Interacts with WDR82.

Its subcellular location is the nucleus. Its function is as follows. In embryonic stem (ES) cells, plays a crucial role in the differentiation potential, particularly along the neural lineage, regulating gene induction and H3 'Lys-4' methylation at key developmental loci, including that mediated by retinoic acid. Does not affect ES cell self-renewal. Component or associated component of some histone methyltransferase complexes which regulates transcription through recruitment of those complexes to gene promoters. As part of the MLL1/MLL complex, involved in mono-, di- and trimethylation at 'Lys-4' of histone H3. Histone H3 'Lys-4' methylation represents a specific tag for epigenetic transcriptional activation. In association with ASH2L and WDR5, stimulates the histone methyltransferase activities of KMT2A, KMT2B, KMT2C, KMT2D, SETD1A and SETD1B. The chain is Retinoblastoma-binding protein 5 (Rbbp5) from Mus musculus (Mouse).